Reading from the N-terminus, the 497-residue chain is Reticulophagy regulator 1 (497 aa).

Positions 1–51 are disordered; sequence MASPAPPEHAEEGCPAPAAEEQAPPSPPPPQASPAERQQQEEEAQEAGAAE. Residues 1 to 59 are Cytoplasmic-facing; the sequence is MASPAPPEHAEEGCPAPAAEEQAPPSPPPPQASPAERQQQEEEAQEAGAAEGAGLQVEE. Residues 13–23 show a composition bias toward low complexity; the sequence is GCPAPAAEEQA. Residues 60–80 traverse the membrane as a helical segment; the sequence is AAGRAAAAVTWLLGEPVLWLG. At 81-95 the chain is on the lumenal side; sequence CRADELLSWKRPLRS. Residues 84–233 form a reticulon homology domain region; sequence DELLSWKRPL…LLCAFLCPLF (150 aa). Residues 96–116 form a helical membrane-spanning segment; the sequence is LLGFVAANLLFWFLALTPWRV. The Cytoplasmic segment spans residues 117–118; it reads YH. The helical transmembrane segment at 119–139 threads the bilayer; it reads LISVMILGRVIMQIIKDMVLS. Residues 140–208 lie on the Lumenal side of the membrane; that stretch reads RTRGAQLWRS…LVCSVCTFFT (69 aa). The residue at position 149 (Ser149) is a Phosphoserine. Phosphoserine; by CAMK2B is present on Ser151. Ser153 bears the Phosphoserine mark. The chain crosses the membrane as a helical span at residues 209-229; sequence ILGSYIPGVILSYLLLLCAFL. Over 230–497 the chain is Cytoplasmic; the sequence is CPLFKCNDIG…GFLSNLLGGH (268 aa). The segment covering 319–330 has biased composition (polar residues); it reads FNLSEGYTPQTD. 4 disordered regions span residues 319–365, 377–396, 436–455, and 468–497; these read FNLS…EDEL, KEQLDSGHRPSKETQSAAGL, LSQAAPIPEEDTDTEEGDDF, and SELGLTQDQEAEAQQNKKSSGFLSNLLGGH. Basic and acidic residues-rich tracts occupy residues 334 to 348 and 377 to 388; these read DLDRPSEEVFSRDLS and KEQLDSGHRPSK. Residues 443-455 show a composition bias toward acidic residues; sequence PEEDTDTEEGDDF. The LIR motif motif lies at 453 to 458; sequence DDFELL. The span at 471 to 490 shows a compositional bias: polar residues; sequence GLTQDQEAEAQQNKKSSGFL.

It belongs to the RETREG family. Homooligomer; oligomerization is enhanced following endoplasmic reticulum stress and is mediated by the reticulon homology domain. Interacts with ATG8 family modifier proteins MAP1LC3A, MAP1LC3B, MAP1LC3C, GABARAP, GABARAPL1 and GABARAPL2. Shows higher affinity for GABARAPL1 than for MAP1LC3A or MAP1LC3B. Post-translationally, phosphorylation at Ser-151 by CAMK2B enhances oligomerization and membrane scission and reticulophagy activity. As to expression, overexpressed in esophageal squamous cell carcinoma.

The protein resides in the golgi apparatus. Its subcellular location is the cis-Golgi network membrane. The protein localises to the endoplasmic reticulum membrane. Its function is as follows. Endoplasmic reticulum (ER)-anchored autophagy regulator which mediates ER delivery into lysosomes through sequestration into autophagosomes. Promotes membrane remodeling and ER scission via its membrane bending capacity and targets the fragments into autophagosomes via interaction with ATG8 family proteins. Active under basal conditions. Required for collagen quality control in a LIR motif-dependent manner. Required for long-term survival of nociceptive and autonomic ganglion neurons. (Microbial infection) During SARS-CoV-2 infection, RETREG1-mediated reticulophagy is promoted by SARS-CoV-2 ORF3A protein. This induces endoplasmic reticulum stress and inflammatory responses and facilitates viral infection. This Homo sapiens (Human) protein is Reticulophagy regulator 1.